The chain runs to 341 residues: Nicotinate-nucleotide--dimethylbenzimidazole phosphoribosyltransferase (341 aa).

Glu310 functions as the Proton acceptor in the catalytic mechanism.

The protein belongs to the CobT family.

It catalyses the reaction 5,6-dimethylbenzimidazole + nicotinate beta-D-ribonucleotide = alpha-ribazole 5'-phosphate + nicotinate + H(+). Its pathway is nucleoside biosynthesis; alpha-ribazole biosynthesis; alpha-ribazole from 5,6-dimethylbenzimidazole: step 1/2. Its function is as follows. Catalyzes the synthesis of alpha-ribazole-5'-phosphate from nicotinate mononucleotide (NAMN) and 5,6-dimethylbenzimidazole (DMB). The sequence is that of Nicotinate-nucleotide--dimethylbenzimidazole phosphoribosyltransferase from Vibrio cholerae serotype O1 (strain ATCC 39315 / El Tor Inaba N16961).